The chain runs to 196 residues: ATP-dependent Clp protease proteolytic subunit (196 aa).

S101 acts as the Nucleophile in catalysis. H126 is an active-site residue.

This sequence belongs to the peptidase S14 family. Component of the chloroplastic Clp protease core complex.

Its subcellular location is the plastid. The protein localises to the chloroplast stroma. The catalysed reaction is Hydrolysis of proteins to small peptides in the presence of ATP and magnesium. alpha-casein is the usual test substrate. In the absence of ATP, only oligopeptides shorter than five residues are hydrolyzed (such as succinyl-Leu-Tyr-|-NHMec, and Leu-Tyr-Leu-|-Tyr-Trp, in which cleavage of the -Tyr-|-Leu- and -Tyr-|-Trp bonds also occurs).. Functionally, cleaves peptides in various proteins in a process that requires ATP hydrolysis. Has a chymotrypsin-like activity. Plays a major role in the degradation of misfolded proteins. This is ATP-dependent Clp protease proteolytic subunit from Gossypium barbadense (Sea Island cotton).